We begin with the raw amino-acid sequence, 91 residues long: Small ribosomal subunit protein uS19 (91 aa).

This sequence belongs to the universal ribosomal protein uS19 family.

Functionally, protein S19 forms a complex with S13 that binds strongly to the 16S ribosomal RNA. This is Small ribosomal subunit protein uS19 from Ectopseudomonas mendocina (strain ymp) (Pseudomonas mendocina).